A 242-amino-acid chain; its full sequence is N-alpha-acetyltransferase 60 (242 aa).

Topologically, residues 1–192 are cytoplasmic; the sequence is MSEEERPAAL…GGHPPWTVMD (192 aa). An N-acetyltransferase domain is found at 13-182; that stretch reads TILRFLCHDD…DAYTYVLYLN (170 aa). Residue Tyr-38 coordinates substrate. Residue Tyr-97 is part of the active site. Position 99 (Leu-99) interacts with substrate. Acetyl-CoA contacts are provided by residues 101 to 103 and 109 to 114; these read LGV and KQGIGS. His-138 is a catalytic residue. Residues Asn-143 and 150–153 contribute to the acetyl-CoA site; that span reads YENR. Residues 162 to 173 are required for homodimerization; sequence PYYYSIRGVLQD. Tyr-165 lines the substrate pocket. An intramembrane region (helical) is located at residues 193–236; that stretch reads YLQHLGSALAGFSPCTLPQRIYRQAHTLLRSLLPWSSISAKSGI. At 237 to 242 the chain is on the cytoplasmic side; sequence EYSRTM.

This sequence belongs to the acetyltransferase family. NAA60 subfamily. In terms of assembly, monomer and homodimer; monomer in presence of substrate and homodimer in its absence.

It is found in the golgi apparatus membrane. It catalyses the reaction N-terminal L-methionyl-[transmembrane protein] + acetyl-CoA = N-terminal N(alpha)-acetyl-L-methionyl-[transmembrane protein] + CoA + H(+). The catalysed reaction is L-lysyl-[protein] + acetyl-CoA = N(6)-acetyl-L-lysyl-[protein] + CoA + H(+). Its function is as follows. N-alpha-acetyltransferase that specifically mediates the acetylation of N-terminal residues of the transmembrane proteins, with a strong preference for N-termini facing the cytosol. Displays N-terminal acetyltransferase activity towards a range of N-terminal sequences including those starting with Met-Lys, Met-Val, Met-Ala and Met-Met. Required for normal chromosomal segregation during anaphase. May also show histone acetyltransferase activity; such results are however unclear in vivo and would require additional experimental evidences. The sequence is that of N-alpha-acetyltransferase 60 (naa60) from Xenopus tropicalis (Western clawed frog).